The sequence spans 75 residues: uncharacterized protein (75 aa).

This is an uncharacterized protein from Treponema pallidum (strain Nichols).